Consider the following 309-residue polypeptide: Ribonuclease Z (309 aa).

Zn(2+) is bound by residues histidine 63, histidine 65, aspartate 67, histidine 68, histidine 145, aspartate 216, and histidine 274. Residue aspartate 67 is the Proton acceptor of the active site.

Belongs to the RNase Z family. In terms of assembly, homodimer. Zn(2+) serves as cofactor.

The catalysed reaction is Endonucleolytic cleavage of RNA, removing extra 3' nucleotides from tRNA precursor, generating 3' termini of tRNAs. A 3'-hydroxy group is left at the tRNA terminus and a 5'-phosphoryl group is left at the trailer molecule.. Zinc phosphodiesterase, which displays some tRNA 3'-processing endonuclease activity. Probably involved in tRNA maturation, by removing a 3'-trailer from precursor tRNA. This is Ribonuclease Z from Streptococcus agalactiae serotype Ia (strain ATCC 27591 / A909 / CDC SS700).